The sequence spans 849 residues: Trehalose-phosphatase (849 aa).

The interval 1–558 is glycosyltransferase; it reads MPSGAQGNTQ…VKALESHMTT (558 aa).

This sequence in the N-terminal section; belongs to the glycosyltransferase 20 family. It in the C-terminal section; belongs to the trehalose phosphatase family. Mg(2+) is required as a cofactor.

It localises to the cytoplasm. It is found in the nucleus. It carries out the reaction alpha,alpha-trehalose 6-phosphate + H2O = alpha,alpha-trehalose + phosphate. Its pathway is carbohydrate biosynthesis. In terms of biological role, phosphatase catalytic subunit of the trehalose synthase complex that catalyzes the production of trehalose from glucose-6-phosphate and UDP-glucose in a two step process. This chain is Trehalose-phosphatase (tps2), found in Schizosaccharomyces pombe (strain 972 / ATCC 24843) (Fission yeast).